A 913-amino-acid polypeptide reads, in one-letter code: MGDSRDLCPHLDSIGEVTKEDLLLKSMGTCQSCGVTGPNLWACLQVACPYVGCGESFADHSTIHAQAKKHNLTVNLTTFRLWCYACEKEVFLEQRLAAPLLGSSKFSEQDSPPPSHPLKAVPIAVADEGESESEDDDLKPRGLTGMKNLGNSCYMNAALQALSNCPPLTQFFLECGGLVRTDKKPALCKSYQKLVSEVWHKKRPSYVVPTSLSHGIKLVNPMFRGYAQQDTQEFLRCLMDQLHEELKEPVVATVALTEARDSDSSDTDEKREGDRSPSEDEFLSCDSSSDRGEGDGQGRGGGSSQAETELLIPDEASRAISEKERMKDRKFSWGQQRTNSEQVDEDADVDTTMAALDDQPAEAQPPSPRSSSPCRTPEPDNDAHLCSSSRPCSPVHHHEGHAKLSSSPPRASPVRMAPSYVLKKAQVLSAGSRRRKEQRYRSVISDIFDGSILSLVQCLTCDRVSATVETFQDLSLPIPGKEDLAKLHSAIYQNVPAKPGTCGDSYAAQGWLAFIVEYIRRFVVSCTPSWFWGPVVTLEDCLAAFFAADELKGDNMYSCERCKKLRNGVKYCKVLRLPEILCIHLKRFRHEVMYSFKINSHVSFPLEGLDLRPFLAKECTSQITTYDLLSVICHHGTAGSGHYIAYCQNVINGQWYEFDDQYVTEVHETVVQNAEGYVLFYRKSSEEAVRERQQVVSLAAMREPSLLRFYVSREWLNKFNTFAEPGPITNQTFLCSHGGIPPHKYHYIDDLVVILPQNVWEHLYNRFGGGPAVNHLYVCSICQVEIEALAKRRRIEIDTFIKLNKAFQAEESPGIIYCISMQWFREWEAFVKGKDNEPPGPIDNSRIAQVKGSGHVQLKQGADYGQISEETWTYLNSLYGGGPEIAIRQSVAQPLGPESLHGEQKIEAEARAV.

A UBP-type zinc finger spans residues 6–111; that stretch reads DLCPHLDSIG…GSSKFSEQDS (106 aa). Positions 8, 10, 30, 33, 43, 48, 53, 60, 64, 70, 83, and 86 each coordinate Zn(2+). Phosphoserine is present on residues serine 111, serine 131, and serine 133. The region spanning 144-684 is the USP domain; the sequence is TGMKNLGNSC…EGYVLFYRKS (541 aa). Residue cysteine 153 is the Nucleophile of the active site. A disordered region spans residues 256 to 414; that stretch reads LTEARDSDSS…SSSPPRASPV (159 aa). Residue threonine 257 is modified to Phosphothreonine. The span at 258-278 shows a compositional bias: basic and acidic residues; sequence EARDSDSSDTDEKREGDRSPS. Residue serine 304 is modified to Phosphoserine. Over residues 315–331 the composition is skewed to basic and acidic residues; sequence EASRAISEKERMKDRKF. Position 367 is a phosphoserine (serine 367). Threonine 376 is subject to Phosphothreonine. Phosphoserine occurs at positions 407 and 412. Histidine 642 acts as the Proton acceptor in catalysis. 2 DUSP domains span residues 686-779 and 788-891; these read EEAV…LYVC and ALAK…RQSV.

The protein belongs to the peptidase C19 family. USP20/USP33 subfamily. As to quaternary structure, interacts with VHL, leading to its ubiquitination and subsequent degradation. Interacts with CCP110. Interacts with DIO2. Interacts with HIF1A. Interacts with ADRB2. Interacts with USP18. In terms of processing, ubiquitinated via a VHL-dependent pathway for proteasomal degradation.

It localises to the cytoplasm. The protein resides in the endoplasmic reticulum. The protein localises to the perinuclear region. Its subcellular location is the cytoskeleton. It is found in the microtubule organizing center. It localises to the centrosome. It catalyses the reaction Thiol-dependent hydrolysis of ester, thioester, amide, peptide and isopeptide bonds formed by the C-terminal Gly of ubiquitin (a 76-residue protein attached to proteins as an intracellular targeting signal).. Functionally, deubiquitinating enzyme that plays a role in many cellular processes including autophagy, cellular antiviral response or membrane protein biogenesis. Attenuates TLR4-mediated NF-kappa-B signaling by cooperating with beta-arrestin-2/ARRB2 and inhibiting TRAF6 autoubiquitination. Promotes cellular antiviral responses by deconjugating 'Lys-33' and 'Lys-48'-linked ubiquitination of STING1 leading to its stabilization. Plays an essential role in autophagy induction by regulating the ULK1 stability through deubiquitination of ULK1. Acts as a positive regulator for NF-kappa-B activation by TNF-alpha through deubiquitinating 'Lys-48'-linked polyubiquitination of SQSTM1, leading to its increased stability. Acts as a regulator of G-protein coupled receptor (GPCR) signaling by mediating the deubiquitination beta-2 adrenergic receptor (ADRB2). Plays a central role in ADRB2 recycling and resensitization after prolonged agonist stimulation by constitutively binding ADRB2, mediating deubiquitination of ADRB2 and inhibiting lysosomal trafficking of ADRB2. Upon dissociation, it is probably transferred to the translocated beta-arrestins, possibly leading to beta-arrestins deubiquitination and disengagement from ADRB2. This suggests the existence of a dynamic exchange between the ADRB2 and beta-arrestins. Deubiquitinates DIO2, thereby regulating thyroid hormone regulation. Deubiquitinates HIF1A, leading to stabilize HIF1A and enhance HIF1A-mediated activity. Deubiquitinates MCL1, a pivotal member of the anti-apoptotic Bcl-2 protein family to regulate its stability. Within the endoplasmic reticulum, participates with USP33 in the rescue of post-translationally targeted membrane proteins that are inappropriately ubiquitinated by the cytosolic protein quality control in the cytosol. This chain is Ubiquitin carboxyl-terminal hydrolase 20 (USP20), found in Pongo abelii (Sumatran orangutan).